Here is a 174-residue protein sequence, read N- to C-terminus: Shikimate kinase (174 aa).

15–20 (GTGKST) serves as a coordination point for ATP. Position 19 (serine 19) interacts with Mg(2+). 3 residues coordinate substrate: aspartate 37, arginine 61, and glycine 82. Arginine 120 provides a ligand contact to ATP. Arginine 138 contacts substrate.

This sequence belongs to the shikimate kinase family. As to quaternary structure, monomer. Mg(2+) is required as a cofactor.

The protein localises to the cytoplasm. The catalysed reaction is shikimate + ATP = 3-phosphoshikimate + ADP + H(+). The protein operates within metabolic intermediate biosynthesis; chorismate biosynthesis; chorismate from D-erythrose 4-phosphate and phosphoenolpyruvate: step 5/7. In terms of biological role, catalyzes the specific phosphorylation of the 3-hydroxyl group of shikimic acid using ATP as a cosubstrate. In Staphylococcus aureus (strain MRSA252), this protein is Shikimate kinase.